The chain runs to 766 residues: ABC-type oligopeptide transporter ABCB9 (766 aa).

Helical transmembrane passes span 7-27 (VVVTLAFMSVDICVTTAIYVF), 47-67 (VLDLWAACLYRSCLLLGATIG), 84-104 (LVITLVCLFVGIYAMVKLLLF), 116-136 (FWALFVWTYISLGASFLLWWL), 185-205 (VAFLVAASFFLIVAALGETFL), 225-245 (FSTAVVIVCLLAIGSSFAAGI), 319-339 (VFMFSLSWQLSLVTFMGFPII), and 416-436 (SGLTLLVVQVSILYYGGHLVI). The region spanning 188–471 (LVAASFFLIV…VGSVYSGLMQ (284 aa)) is the ABC transmembrane type-1 domain. Residues 504–740 (VDFENVTFTY…GGLYAKLVQR (237 aa)) form the ABC transporter domain. 539–546 (GPSGSGKS) is an ATP binding site.

Belongs to the ABC transporter superfamily. ABCB family. MHC peptide exporter (TC 3.A.1.209) subfamily. Homodimer. Interacts (via TMD0 region) with LAMP1; this interaction strongly stabilizes ABCB9 and protects ABCB9 against lysosomal degradation. Interacts (via TMD0 region) with LAMP2 (isoform LAMP-2B). Interacts (via TMD0) with YIF1B; this interaction allows (but is not essential) the ER-to-Golgi trafficking and strongly depends on a salt bridge within TMD0. Highly expressed in testis, and at moderate levels in brain, spinal cord, and thyroid. Not expressed in monocytes but strongly expressed during differentiation of monocytes to dendritic cells and macrophages.

The protein resides in the lysosome membrane. It catalyses the reaction a [oligopeptide](in) + ATP + H2O = a [oligopeptide](out) + ADP + phosphate + H(+). With respect to regulation, transport activity is limited by threshold levels of luminal peptide. ATP hydrolysis is reduced in the presence of the spatial challenging 18-mer peptide by 50% and the branched 16-mer peptide by 75%. Transport rate of the longer peptides is strongly reduced. Its function is as follows. ATP-dependent low-affinity peptide transporter which translocates a broad spectrum of peptides from the cytosol to the lysosomal lumen for degradation. Displays a broad peptide length specificity from 6-mer up to at least 59-mer peptides with an optimum of 23-mers. Binds and transports smaller and larger peptides with the same affinity. Favors positively charged, aromatic or hydrophobic residues in the N- and C-terminal positions whereas negatively charged residues as well as asparagine and methionine are not favored. This chain is ABC-type oligopeptide transporter ABCB9, found in Homo sapiens (Human).